The chain runs to 152 residues: Outer membrane protein assembly factor BamE (152 aa).

An N-terminal signal peptide occupies residues 1–32 (MIDQNHDSEEQAQMQKLTRTVTLTVALTLVSG). A lipid anchor (N-palmitoyl cysteine) is attached at Cys33. Cys33 carries S-diacylglycerol cysteine lipidation. A disordered region spans residues 114 to 152 (IDRHGDFSRPPSVADERGIGPTDSTNARGNLLNARPDDE).

Belongs to the BamE family. In terms of assembly, part of the Bam complex.

The protein localises to the cell outer membrane. Part of the outer membrane protein assembly complex, which is involved in assembly and insertion of beta-barrel proteins into the outer membrane. The chain is Outer membrane protein assembly factor BamE from Halomonas elongata (strain ATCC 33173 / DSM 2581 / NBRC 15536 / NCIMB 2198 / 1H9).